Consider the following 954-residue polypeptide: ATPase 9, plasma membrane-type (954 aa).

Topologically, residues Met-1–Phe-66 are cytoplasmic. Residues Leu-67–Ile-86 form a helical membrane-spanning segment. The Extracellular segment spans residues Ala-87 to Trp-98. Residues Gln-99–Glu-119 traverse the membrane as a helical segment. Residues Asn-120–Ile-248 are Cytoplasmic-facing. The helical transmembrane segment at Gly-249 to Pro-269 threads the bilayer. At Ile-270–Gly-278 the chain is on the extracellular side. The chain crosses the membrane as a helical span at residues Ile-279–Thr-296. Over Val-297–Lys-648 the chain is Cytoplasmic. The active-site 4-aspartylphosphate intermediate is the Asp-334. Mg(2+) contacts are provided by Asp-593 and Asp-597. Residues Asn-649–Leu-670 traverse the membrane as a helical segment. The Extracellular portion of the chain corresponds to Ile-671–Asp-675. The chain crosses the membrane as a helical span at residues Phe-676–Asp-698. The Cytoplasmic segment spans residues Arg-699 to Ile-714. A helical membrane pass occupies residues Phe-715 to Ala-735. Over Ala-736–His-756 the chain is Extracellular. The chain crosses the membrane as a helical span at residues Glu-757–Thr-777. At Arg-778 to Gly-789 the chain is on the cytoplasmic side. Residues Phe-790–Ala-810 traverse the membrane as a helical segment. Topologically, residues Asn-811 to Arg-818 are extracellular. Residues Gly-819–Leu-839 traverse the membrane as a helical segment. Topologically, residues Asp-840–Leu-954 are cytoplasmic. The residue at position 886 (Thr-886) is a Phosphothreonine. Phosphoserine is present on Ser-936. The interaction with 14-3-3 proteins stretch occupies residues Tyr-952 to Leu-954. Thr-953 is modified (phosphothreonine).

The protein belongs to the cation transport ATPase (P-type) (TC 3.A.3) family. Type IIIA subfamily. In terms of assembly, binds to 14-3-3 proteins. The binding is induced by phosphorylation of Thr-953. Binding to 14-3-3 proteins activates the H(+)-ATPase. Anther specific. Expressed in guard cells.

It localises to the membrane. The catalysed reaction is ATP + H2O + H(+)(in) = ADP + phosphate + 2 H(+)(out). In terms of biological role, the plasma membrane H(+) ATPase of plants and fungi generates a proton gradient that drives the active transport of nutrients by H(+)-symport. The resulting external acidification and/or internal alkinization may mediate growth responses. This is ATPase 9, plasma membrane-type (AHA9) from Arabidopsis thaliana (Mouse-ear cress).